The following is a 637-amino-acid chain: Sphingomyelin phosphodiesterase B (637 aa).

Positions 1-20 are cleaved as a signal peptide; that stretch reads MKVKAPILLLFVFLINFCFS. Asparagine 73 carries N-linked (GlcNAc...) asparagine glycosylation. In terms of domain architecture, Saposin B-type spans 73-155; it reads NGTKCDICKF…GFVGFCPYVP (83 aa). Disulfide bonds link cysteine 77–cysteine 151, cysteine 80–cysteine 145, and cysteine 108–cysteine 119. N-linked (GlcNAc...) asparagine glycans are attached at residues asparagine 128 and asparagine 157. Aspartate 191 and histidine 193 together coordinate Zn(2+). The cysteines at positions 212 and 233 are disulfide-linked. Aspartate 263 contributes to the Zn(2+) binding site. Residue asparagine 279 is glycosylated (N-linked (GlcNAc...) asparagine). Position 304 (asparagine 304) interacts with Zn(2+). A glycan (N-linked (GlcNAc...) asparagine) is linked at asparagine 377. Zn(2+) is bound by residues histidine 407, histidine 441, and histidine 443. Asparagine 523 and asparagine 546 each carry an N-linked (GlcNAc...) asparagine glycan. Cysteine 582 and cysteine 595 are joined by a disulfide. Asparagine 606 carries an N-linked (GlcNAc...) asparagine glycan.

Belongs to the acid sphingomyelinase family. Zn(2+) serves as cofactor.

It localises to the secreted. Converts sphingomyelin to ceramide. The chain is Sphingomyelin phosphodiesterase B (sgmB) from Dictyostelium discoideum (Social amoeba).